Consider the following 132-residue polypeptide: Large ribosomal subunit protein bL17 (132 aa).

Belongs to the bacterial ribosomal protein bL17 family. Part of the 50S ribosomal subunit. Contacts protein L32.

The chain is Large ribosomal subunit protein bL17 from Cellvibrio japonicus (strain Ueda107) (Pseudomonas fluorescens subsp. cellulosa).